We begin with the raw amino-acid sequence, 157 residues long: SsrA-binding protein (157 aa).

The tract at residues 133 to 157 (LHDKRETEKKRDWSREKGRLLRARG) is disordered. The span at 135–151 (DKRETEKKRDWSREKGR) shows a compositional bias: basic and acidic residues.

It belongs to the SmpB family.

The protein resides in the cytoplasm. Required for rescue of stalled ribosomes mediated by trans-translation. Binds to transfer-messenger RNA (tmRNA), required for stable association of tmRNA with ribosomes. tmRNA and SmpB together mimic tRNA shape, replacing the anticodon stem-loop with SmpB. tmRNA is encoded by the ssrA gene; the 2 termini fold to resemble tRNA(Ala) and it encodes a 'tag peptide', a short internal open reading frame. During trans-translation Ala-aminoacylated tmRNA acts like a tRNA, entering the A-site of stalled ribosomes, displacing the stalled mRNA. The ribosome then switches to translate the ORF on the tmRNA; the nascent peptide is terminated with the 'tag peptide' encoded by the tmRNA and targeted for degradation. The ribosome is freed to recommence translation, which seems to be the essential function of trans-translation. The protein is SsrA-binding protein of Bradyrhizobium diazoefficiens (strain JCM 10833 / BCRC 13528 / IAM 13628 / NBRC 14792 / USDA 110).